Consider the following 478-residue polypeptide: Glycogen synthase (478 aa).

An ADP-alpha-D-glucose-binding site is contributed by Lys-15.

The protein belongs to the glycosyltransferase 1 family. Bacterial/plant glycogen synthase subfamily.

It catalyses the reaction [(1-&gt;4)-alpha-D-glucosyl](n) + ADP-alpha-D-glucose = [(1-&gt;4)-alpha-D-glucosyl](n+1) + ADP + H(+). It participates in glycan biosynthesis; glycogen biosynthesis. Its function is as follows. Synthesizes alpha-1,4-glucan chains using ADP-glucose. The protein is Glycogen synthase of Actinobacillus pleuropneumoniae serotype 5b (strain L20).